The chain runs to 353 residues: GTPase Obg (353 aa).

One can recognise an Obg domain in the interval 1 to 159 (MKFLDEAKVY…RWIWLRLKLI (159 aa)). An OBG-type G domain is found at 160-327 (ADAGLVGLPN…ALRALVAVIG (168 aa)). Residues 166–173 (GLPNAGKS), 191–195 (FTTLH), 212–215 (DIPG), 279–282 (NKID), and 308–310 (SGV) contribute to the GTP site. Residues S173 and T193 each coordinate Mg(2+).

The protein belongs to the TRAFAC class OBG-HflX-like GTPase superfamily. OBG GTPase family. As to quaternary structure, monomer. Requires Mg(2+) as cofactor.

Its subcellular location is the cytoplasm. Its function is as follows. An essential GTPase which binds GTP, GDP and possibly (p)ppGpp with moderate affinity, with high nucleotide exchange rates and a fairly low GTP hydrolysis rate. Plays a role in control of the cell cycle, stress response, ribosome biogenesis and in those bacteria that undergo differentiation, in morphogenesis control. The chain is GTPase Obg from Rhodopseudomonas palustris (strain ATCC BAA-98 / CGA009).